A 480-amino-acid polypeptide reads, in one-letter code: Major capsid protein (480 aa).

Residues 138-175 (EIMKQAIEAGVKVRELEAKVEELNKEREELKKEREASI) are a coiled coil. Residues 163-184 (EREELKKEREASIPSEKPEDAE) form a disordered region.

The protein localises to the virion. Assembles to form a prolate capsid about 56 nm in length and 41 nm in width. This Lactococcus (lactic streptococci) protein is Major capsid protein (l5).